A 260-amino-acid polypeptide reads, in one-letter code: Cytochrome c oxidase subunit 2 (260 aa).

Topologically, residues 1 to 43 are mitochondrial intermembrane; that stretch reads MILRLLECRFFTIALCDAAEPWQLGFQDAATPMMQGIIDLHHD. Residues 44–64 form a helical membrane-spanning segment; the sequence is IFFFLILILVFVLWMLVRALW. Topologically, residues 65-84 are mitochondrial matrix; sequence HFNEQTNPIPQRIVHGTTIE. Residues 85–105 traverse the membrane as a helical segment; the sequence is IIWTIFPSVILLFIAIPSFAL. Residues 106–260 are Mitochondrial intermembrane-facing; the sequence is LYSMDGVLVD…VSNQLILQTN (155 aa). Residues H189, C224, E226, C228, H232, and M235 each coordinate Cu cation. Mg(2+) is bound at residue E226.

This sequence belongs to the cytochrome c oxidase subunit 2 family. In terms of assembly, component of the cytochrome c oxidase (complex IV, CIV), a multisubunit enzyme composed of a catalytic core of 3 subunits and several supernumerary subunits. The complex exists as a monomer or a dimer and forms supercomplexes (SCs) in the inner mitochondrial membrane with ubiquinol-cytochrome c oxidoreductase (cytochrome b-c1 complex, complex III, CIII). Requires Cu cation as cofactor.

It is found in the mitochondrion inner membrane. It catalyses the reaction 4 Fe(II)-[cytochrome c] + O2 + 8 H(+)(in) = 4 Fe(III)-[cytochrome c] + 2 H2O + 4 H(+)(out). In terms of biological role, component of the cytochrome c oxidase, the last enzyme in the mitochondrial electron transport chain which drives oxidative phosphorylation. The respiratory chain contains 3 multisubunit complexes succinate dehydrogenase (complex II, CII), ubiquinol-cytochrome c oxidoreductase (cytochrome b-c1 complex, complex III, CIII) and cytochrome c oxidase (complex IV, CIV), that cooperate to transfer electrons derived from NADH and succinate to molecular oxygen, creating an electrochemical gradient over the inner membrane that drives transmembrane transport and the ATP synthase. Cytochrome c oxidase is the component of the respiratory chain that catalyzes the reduction of oxygen to water. Electrons originating from reduced cytochrome c in the intermembrane space (IMS) are transferred via the dinuclear copper A center (CU(A)) of subunit 2 and heme A of subunit 1 to the active site in subunit 1, a binuclear center (BNC) formed by heme A3 and copper B (CU(B)). The BNC reduces molecular oxygen to 2 water molecules using 4 electrons from cytochrome c in the IMS and 4 protons from the mitochondrial matrix. This chain is Cytochrome c oxidase subunit 2 (COX2), found in Zea mays (Maize).